Consider the following 287-residue polypeptide: Elongation factor Ts (287 aa).

Residues 80–83 (TDFL) form an involved in Mg(2+) ion dislocation from EF-Tu region.

The protein belongs to the EF-Ts family.

It is found in the cytoplasm. Its function is as follows. Associates with the EF-Tu.GDP complex and induces the exchange of GDP to GTP. It remains bound to the aminoacyl-tRNA.EF-Tu.GTP complex up to the GTP hydrolysis stage on the ribosome. This chain is Elongation factor Ts, found in Pseudomonas putida (strain ATCC 700007 / DSM 6899 / JCM 31910 / BCRC 17059 / LMG 24140 / F1).